Reading from the N-terminus, the 415-residue chain is Packaging protein 3 (415 aa).

Residues 1 to 55 (MHPVLRQMRPPPQQRQEQEQRQTCRAPSPPPTASGGATSAVDAAADGDYEPPRRR) are disordered. An interaction with packaging protein 1 region spans residues 1-173 (MHPVLRQMRP…VNQEINFQKS (173 aa)). Phosphoserine; by host occurs at positions 75 and 360. Over residues 381 to 394 (GAGPGLAVAPARAG) the composition is skewed to low complexity. A disordered region spans residues 381–415 (GAGPGLAVAPARAGNVGGVEEYDEDDEYEPEDGEY). Positions 400–415 (EEYDEDDEYEPEDGEY) are enriched in acidic residues.

The protein belongs to the adenoviridae packaging protein 3 family. As to quaternary structure, part of the genome packaging complex composed of packaging proteins 1, 2 and 3; this complex specifically binds to the packaging sequence on the left end of viral genomic DNA and performs packaging of the viral genome. Interacts with hexon-linking protein IIIa; this interaction is required to promote correct genome packaging. In terms of processing, cleaved at different sites by the viral protease during virion maturation.

It localises to the host nucleus. Involved in viral genome packaging through its interaction with packaging proteins 1 and 2. After proteolytic cleavage by adenovirus protease, L1 52/55k protein is removed from the capsid during viral maturation. In Homo sapiens (Human), this protein is Packaging protein 3.